A 149-amino-acid chain; its full sequence is Prefoldin subunit alpha (149 aa).

This sequence belongs to the prefoldin alpha subunit family. Heterohexamer of two alpha and four beta subunits.

It is found in the cytoplasm. Molecular chaperone capable of stabilizing a range of proteins. Seems to fulfill an ATP-independent, HSP70-like function in archaeal de novo protein folding. The polypeptide is Prefoldin subunit alpha (Methanoculleus marisnigri (strain ATCC 35101 / DSM 1498 / JR1)).